Here is a 63-residue protein sequence, read N- to C-terminus: Large ribosomal subunit protein uL29 (63 aa).

This sequence belongs to the universal ribosomal protein uL29 family.

The polypeptide is Large ribosomal subunit protein uL29 (Serratia proteamaculans (strain 568)).